The sequence spans 255 residues: ATP synthase subunit a 2 (255 aa).

The next 5 helical transmembrane spans lie at 24–44 (WFGINLDSMIMVWLTGLVFIL), 86–106 (LIGPLALTIFVWVLLMNAVDL), 131–151 (DINITMSMALGVFILVLGYTF), 205–225 (MIFILIALMPWWMQWALSVPW), and 226–246 (ALFHILIVVLQAFIFMVLTVV).

It belongs to the ATPase A chain family. As to quaternary structure, F-type ATPases have 2 components, CF(1) - the catalytic core - and CF(0) - the membrane proton channel. CF(1) has five subunits: alpha(3), beta(3), gamma(1), delta(1), epsilon(1). CF(0) has three main subunits: a(1), b(2) and c(9-12). The alpha and beta chains form an alternating ring which encloses part of the gamma chain. CF(1) is attached to CF(0) by a central stalk formed by the gamma and epsilon chains, while a peripheral stalk is formed by the delta and b chains.

The protein localises to the cell inner membrane. In terms of biological role, key component of the proton channel; it plays a direct role in the translocation of protons across the membrane. This Vibrio campbellii (strain ATCC BAA-1116) protein is ATP synthase subunit a 2.